The following is a 576-amino-acid chain: Calmodulin-binding protein 60 B (576 aa).

The disordered stretch occupies residues 1–25 (MMLPTKRPAPDHGDDERNEVMVPEP). Positions 1–80 (MMLPTKRPAP…HPSSRPSLNR (80 aa)) are calmodulin-binding. The span at 8–25 (PAPDHGDDERNEVMVPEP) shows a compositional bias: basic and acidic residues. The DNA-binding stretch occupies residues 150 to 273 (DERQDWTENE…AFHKRLAYKN (124 aa)).

It belongs to the plant ACBP60 protein family. As to quaternary structure, (Microbial infection) Interacts with V.dahliae SCP41. In terms of assembly, interacts with calmodulin (CaM).

Its subcellular location is the nucleus. Functionally, transcription activator that binds DNA in a sequence-specific manner, likely 5'-GAAATTTTGG-3', to promote the expression of target genes. Required for pathogen resistance. This Gossypium hirsutum (Upland cotton) protein is Calmodulin-binding protein 60 B.